The sequence spans 240 residues: uncharacterized protein (240 aa).

The ABC transporter domain occupies 2 to 223; it reads VRIQDLSLAF…GNAPRELHQA (222 aa). 34-41 contributes to the ATP binding site; it reads GSSGVGKS.

Belongs to the ABC transporter superfamily.

This is an uncharacterized protein from Haemophilus influenzae (strain ATCC 51907 / DSM 11121 / KW20 / Rd).